The chain runs to 265 residues: Type II pantothenate kinase (265 aa).

6–13 (DAGGTLIK) contacts ATP. Glu-70 (proton acceptor) is an active-site residue. ATP is bound by residues Thr-99, 121 to 125 (GGMIQ), Tyr-137, and Ser-225.

It belongs to the type II pantothenate kinase family. Homodimer.

It localises to the cytoplasm. It catalyses the reaction (R)-pantothenate + ATP = (R)-4'-phosphopantothenate + ADP + H(+). It participates in cofactor biosynthesis; coenzyme A biosynthesis; CoA from (R)-pantothenate: step 1/5. Its function is as follows. Catalyzes the phosphorylation of pantothenate (Pan), the first step in CoA biosynthesis. This Staphylococcus epidermidis (strain ATCC 35984 / DSM 28319 / BCRC 17069 / CCUG 31568 / BM 3577 / RP62A) protein is Type II pantothenate kinase.